The following is a 127-amino-acid chain: Large ribosomal subunit protein bL17 (127 aa).

Belongs to the bacterial ribosomal protein bL17 family. Part of the 50S ribosomal subunit. Contacts protein L32.

This Lactobacillus johnsonii (strain CNCM I-12250 / La1 / NCC 533) protein is Large ribosomal subunit protein bL17.